Consider the following 127-residue polypeptide: uncharacterized protein (127 aa).

Positions 1–13 are enriched in polar residues; the sequence is MEAGNRSGTPQHR. Residues 1 to 26 form a disordered region; that stretch reads MEAGNRSGTPQHRQLSEIRQDLSSSP.

This is an uncharacterized protein from Saccharomyces cerevisiae (strain ATCC 204508 / S288c) (Baker's yeast).